A 514-amino-acid polypeptide reads, in one-letter code: 2,3-bisphosphoglycerate-independent phosphoglycerate mutase (514 aa).

Mn(2+) contacts are provided by Asp-14 and Ser-64. Catalysis depends on Ser-64, which acts as the Phosphoserine intermediate. Residues His-125, 155-156, Arg-187, Arg-193, 263-266, and Lys-336 each bind substrate; these read RD and RADR. Residues Asp-403, His-407, Asp-444, His-445, and His-463 each contribute to the Mn(2+) site.

It belongs to the BPG-independent phosphoglycerate mutase family. As to quaternary structure, monomer. It depends on Mn(2+) as a cofactor.

It catalyses the reaction (2R)-2-phosphoglycerate = (2R)-3-phosphoglycerate. The protein operates within carbohydrate degradation; glycolysis; pyruvate from D-glyceraldehyde 3-phosphate: step 3/5. Its activity is regulated as follows. Insensitive to vanadate. Its function is as follows. Catalyzes the interconversion of 2-phosphoglycerate (2-PGA) and 3-phosphoglycerate (3-PGA). The protein is 2,3-bisphosphoglycerate-independent phosphoglycerate mutase of Escherichia coli (strain K12).